The chain runs to 164 residues: UPF0114 protein KPK_0696 (164 aa).

4 consecutive transmembrane segments (helical) span residues Leu-15–Phe-35, Leu-53–Val-73, Val-109–Met-126, and Leu-136–Leu-156.

It belongs to the UPF0114 family.

Its subcellular location is the cell membrane. This chain is UPF0114 protein KPK_0696, found in Klebsiella pneumoniae (strain 342).